Consider the following 188-residue polypeptide: Ribosome maturation factor RimM (188 aa).

The PRC barrel domain occupies 98–171; it reads EGEFFQGDLV…RIVIHPPEYV (74 aa).

It belongs to the RimM family. Binds ribosomal protein uS19.

It localises to the cytoplasm. Functionally, an accessory protein needed during the final step in the assembly of 30S ribosomal subunit, possibly for assembly of the head region. Essential for efficient processing of 16S rRNA. May be needed both before and after RbfA during the maturation of 16S rRNA. It has affinity for free ribosomal 30S subunits but not for 70S ribosomes. The polypeptide is Ribosome maturation factor RimM (Myxococcus xanthus (strain DK1622)).